Here is a 367-residue protein sequence, read N- to C-terminus: 2-aminoethylphosphonate--pyruvate transaminase (367 aa).

Lys-194 is subject to N6-(pyridoxal phosphate)lysine.

Belongs to the class-V pyridoxal-phosphate-dependent aminotransferase family. PhnW subfamily. As to quaternary structure, homodimer. It depends on pyridoxal 5'-phosphate as a cofactor.

It carries out the reaction (2-aminoethyl)phosphonate + pyruvate = phosphonoacetaldehyde + L-alanine. In terms of biological role, involved in phosphonate degradation. The protein is 2-aminoethylphosphonate--pyruvate transaminase of Klebsiella pneumoniae subsp. pneumoniae (strain ATCC 700721 / MGH 78578).